Reading from the N-terminus, the 127-residue chain is Copper resistance protein C (127 aa).

The first 25 residues, 1–25 (MFAFRSIATTVVMVAASLASASAFA), serve as a signal peptide directing secretion. Cu cation is bound by residues His26, Met65, Met68, Met71, Met76, and His116.

This sequence belongs to the CopC family.

Its subcellular location is the periplasm. Its function is as follows. Copper-binding protein involved in copper resistance. This chain is Copper resistance protein C, found in Xanthomonas campestris pv. juglandis (Xanthomonas arboricola pv. juglandis).